The chain runs to 203 residues: Outer-membrane lipoprotein carrier protein (203 aa).

The signal sequence occupies residues 1–21; the sequence is MKKLAITCALLSGMVVSQVWA. Residues 184-203 are disordered; sequence DASKFTFTPPKGVTVDDQRK.

The protein belongs to the LolA family. In terms of assembly, monomer.

It is found in the periplasm. Its function is as follows. Participates in the translocation of lipoproteins from the inner membrane to the outer membrane. Only forms a complex with a lipoprotein if the residue after the N-terminal Cys is not an aspartate (The Asp acts as a targeting signal to indicate that the lipoprotein should stay in the inner membrane). In Klebsiella pneumoniae (strain 342), this protein is Outer-membrane lipoprotein carrier protein.